The following is a 1549-amino-acid chain: Zinc finger MYM-type protein 4 (1549 aa).

N-acetylalanine is present on Ala2. The interval 83–108 is disordered; that stretch reads VVSSDNEDEQDCSSKDNLVSSVHTDG. Polar residues predominate over residues 97 to 106; sequence KDNLVSSVHT. Thr106 carries the phosphothreonine modification. Residues Ser109 and Ser121 each carry the phosphoserine modification. Glycyl lysine isopeptide (Lys-Gly) (interchain with G-Cter in SUMO2) cross-links involve residues Lys139 and Lys148. Residue Ser161 is modified to Phosphoserine. Lys195 participates in a covalent cross-link: Glycyl lysine isopeptide (Lys-Gly) (interchain with G-Cter in SUMO2). The residue at position 197 (Ser197) is a Phosphoserine. Residues Lys201 and Lys232 each participate in a glycyl lysine isopeptide (Lys-Gly) (interchain with G-Cter in SUMO2) cross-link. A Phosphoserine modification is found at Ser242. Residue Lys250 forms a Glycyl lysine isopeptide (Lys-Gly) (interchain with G-Cter in SUMO1); alternate linkage. Lys250 is covalently cross-linked (Glycyl lysine isopeptide (Lys-Gly) (interchain with G-Cter in SUMO2); alternate). The segment at 267 to 291 is disordered; it reads GLLDRVKDEPDNAQEYSHGQQQKTQ. Glycyl lysine isopeptide (Lys-Gly) (interchain with G-Cter in SUMO2) cross-links involve residues Lys273, Lys289, Lys327, Lys400, Lys428, and Lys430. The span at 280–290 shows a compositional bias: polar residues; the sequence is QEYSHGQQQKT. MYM-type zinc fingers lie at residues 362-402, 414-457, 464-499, 510-544, 554-592, 600-631, 708-742, 749-788, and 795-829; these read QLFC…PKDV, KDFC…RHEV, HKLCSDACFSKFRSANNLTMNCCENCGGYCYSGSGQ, KKFCSSMCVTSYKQKSAKITPCALCKSLRSSAEMI, ELFCSVNCLSAYRVKMVTSAGVQVQCNSCKTSAIPQYHL, RNFCSYSCVVAFQNLFNKPTGMNSSVVPLSQG, FQFCGKNCCDEYKKINNVMAMCEYCKIEKIIKETV, KSFCSEGCKLLYKHDLGKRWGSHCKMCSYCLQTSPKLIQN, and EDFCCEECMSKYTVLFYQMAKCDGCKRQGKLSESL. Glycyl lysine isopeptide (Lys-Gly) (interchain with G-Cter in SUMO2) cross-links involve residues Lys1035 and Lys1062. Residues Ser1065 and Ser1072 each carry the phosphoserine modification. Residues Lys1081 and Lys1128 each participate in a glycyl lysine isopeptide (Lys-Gly) (interchain with G-Cter in SUMO2) cross-link. The segment at 1124–1185 is disordered; sequence DSELKPFSKG…RRGRKKSVVP (62 aa). Positions 1125–1135 are enriched in basic and acidic residues; that stretch reads SELKPFSKGET. The segment covering 1161–1182 has biased composition (basic residues); it reads SRTRRRHRDGFPQPRRRGRKKS. A phosphoserine mark is found at Ser1182 and Ser1257. Residue Lys1432 forms a Glycyl lysine isopeptide (Lys-Gly) (interchain with G-Cter in SUMO2) linkage. Residues Ser1540, Ser1543, and Ser1548 each carry the phosphoserine modification.

Its function is as follows. Plays a role in the regulation of cell morphology and cytoskeletal organization. The sequence is that of Zinc finger MYM-type protein 4 (Zmym4) from Mus musculus (Mouse).